Consider the following 539-residue polypeptide: Laccase-1 (539 aa).

The first 21 residues, Met1–Ala21, serve as a signal peptide directing secretion. 2 consecutive Plastocyanin-like domains span residues Ala37–Glu154 and Glu166–Gly309. Asn78 is a glycosylation site (N-linked (GlcNAc...) asparagine). Residues His88 and His90 each coordinate Cu cation. Intrachain disulfides connect Cys109-Cys513 and Cys141-Cys228. A glycan (N-linked (GlcNAc...) asparagine) is linked at Asn120. Positions 133 and 135 each coordinate Cu cation. Asn202, Asn233, Asn240, Asn293, Asn318, Asn353, Asn385, and Asn405 each carry an N-linked (GlcNAc...) asparagine glycan. In terms of domain architecture, Plastocyanin-like 3 spans Ser374 to Pro495. 3 residues coordinate Cu cation: His421, His424, and His426. Residue Asn457 is glycosylated (N-linked (GlcNAc...) asparagine). Positions 476, 477, 478, and 482 each coordinate Cu cation. The N-linked (GlcNAc...) asparagine glycan is linked to Asn532.

This sequence belongs to the multicopper oxidase family. Requires Cu cation as cofactor.

It localises to the secreted. The enzyme catalyses 4 hydroquinone + O2 = 4 benzosemiquinone + 2 H2O. Inhibited by chloride ions. Inhibited by citrate. Inhibited by oxalate. Activated by acetate. Its function is as follows. In vitro, has activity towards 2,2'-azino-bis(3-ethylbenzthiazoline-6-sulfonic acid) (ABTS), 2,6-dimethoxy-phenol, and guaiacol. Although brown rot fungi preferentially degrade hemicellulose and cellulose, the enzyme may contribute to generating small amounts of lignin breakdown products required for catalytic reactions. The sequence is that of Laccase-1 from Fomitopsis schrenkii (Brown rot fungus).